The following is a 132-amino-acid chain: ATP synthase epsilon chain (132 aa).

The protein belongs to the ATPase epsilon chain family. As to quaternary structure, F-type ATPases have 2 components, CF(1) - the catalytic core - and CF(0) - the membrane proton channel. CF(1) has five subunits: alpha(3), beta(3), gamma(1), delta(1), epsilon(1). CF(0) has three main subunits: a, b and c.

Its subcellular location is the cell inner membrane. Its function is as follows. Produces ATP from ADP in the presence of a proton gradient across the membrane. The chain is ATP synthase epsilon chain from Gloeobacter violaceus (strain ATCC 29082 / PCC 7421).